The sequence spans 342 residues: Probable endoglucanase (342 aa).

The first 20 residues, 1–20 (MSVMAAMGGAQVLSSTGAFA), serve as a signal peptide directing secretion. Residue Glu-57 is the Proton donor of the active site. Asp-114 (nucleophile) is an active-site residue.

This sequence belongs to the glycosyl hydrolase 8 (cellulase D) family.

It is found in the secreted. It catalyses the reaction Endohydrolysis of (1-&gt;4)-beta-D-glucosidic linkages in cellulose, lichenin and cereal beta-D-glucans.. Its function is as follows. Enzyme capable of hydrolyzing carboxy-methyl-cellulose (CMC). The polypeptide is Probable endoglucanase (cmcAX) (Novacetimonas hansenii (Komagataeibacter hansenii)).